The chain runs to 370 residues: Sodium-dependent organic anion transporter (370 aa).

Positions 1–24 (MSADCEGNSTCPANSTEEDPPVGM) are disordered. The Extracellular segment spans residues 1 to 32 (MSADCEGNSTCPANSTEEDPPVGMEGQGSLKL). 2 N-linked (GlcNAc...) asparagine glycosylation sites follow: Asn-8 and Asn-14. Residues 33-53 (VFTVLSAVMVGLVMFSFGCSV) form a helical membrane-spanning segment. At 54 to 67 (ESRKLWLHLRRPWG) the chain is on the cytoplasmic side. Residues 68 to 88 (IAVGLLCQFGLMPLTAYLLAI) traverse the membrane as a helical segment. The Extracellular segment spans residues 89–97 (GFGLKPFQA). The chain crosses the membrane as a helical span at residues 98–118 (IAVLIMGSCPGGTVSNVLTFW). Residues 119 to 126 (VDGDMDLS) lie on the Cytoplasmic side of the membrane. Residues 127–147 (ISMTTCSTVAALGMMPLCLYV) form a helical membrane-spanning segment. At 148–159 (YTRSWTLPQSLT) the chain is on the extracellular side. The chain crosses the membrane as a helical span at residues 160 to 180 (IPYQSIGITLVSLVVPVASGI). Residues 181–195 (YVNYRWPKQATFILK) are Cytoplasmic-facing. Residues 196 to 216 (VGAAVGGMLLLVVAVTGVVLA) traverse the membrane as a helical segment. The Extracellular portion of the chain corresponds to 217-224 (KGWNIDVT). A helical membrane pass occupies residues 225-245 (LLVISCIFPLVGHVMGFLLAF). The Cytoplasmic portion of the chain corresponds to 246 to 265 (LTHQSWQRCRTISIETGAQN). A helical membrane pass occupies residues 266–283 (IQLCIAMMQLSFSAEYLV). Position 284 (Gln-284) is a topological domain, extracellular. Residues 285–305 (LLNFALAYGLFQVLHGLLIVA) form a helical membrane-spanning segment. At 306 to 370 (AYQAYKRRQK…ELTSHVPSCE (65 aa)) the chain is on the cytoplasmic side.

It belongs to the bile acid:sodium symporter (BASS) (TC 2.A.28) family. Glycosylated. In terms of tissue distribution, highly expressed in heart, lung, spleen and adrenal gland. Moderately expressed in skeletal muscle, testis and small intestine.

It localises to the membrane. It catalyses the reaction estrone 3-sulfate(out) + 2 Na(+)(out) = estrone 3-sulfate(in) + 2 Na(+)(in). The enzyme catalyses 17beta-estradiol 3-sulfate(out) + 2 Na(+)(out) = 17beta-estradiol 3-sulfate(in) + 2 Na(+)(in). The catalysed reaction is dehydroepiandrosterone 3-sulfate(out) + 2 Na(+)(out) = dehydroepiandrosterone 3-sulfate(in) + 2 Na(+)(in). It carries out the reaction androst-5-ene-diol 3-sulfate(out) + 2 Na(+)(out) = androst-5-ene-diol 3-sulfate(in) + 2 Na(+)(in). It catalyses the reaction pregnenolone sulfate(out) + 2 Na(+)(out) = pregnenolone sulfate(in) + 2 Na(+)(in). The enzyme catalyses taurolithocholate 3-sulfate(out) + 2 Na(+)(out) = taurolithocholate 3-sulfate(in) + 2 Na(+)(in). The catalysed reaction is androsterone 3alpha-sulfate(out) + 2 Na(+)(out) = androsterone 3alpha-sulfate(in) + 2 Na(+)(in). It carries out the reaction 5alpha-dihydrotestosterone sulfate(out) + 2 Na(+)(out) = 5alpha-dihydrotestosterone sulfate(in) + 2 Na(+)(in). It catalyses the reaction 17beta-estradiol 17-sulfate(out) + 2 Na(+)(out) = 17beta-estradiol 17-sulfate(in) + 2 Na(+)(in). The enzyme catalyses 17alpha-hydroxypregnenolone 3-sulfate(out) + 2 Na(+)(out) = 17alpha-hydroxypregnenolone 3-sulfate(in) + 2 Na(+)(in). The catalysed reaction is epiandrosterone 3-sulfate(out) + 2 Na(+)(out) = epiandrosterone 3-sulfate(in) + 2 Na(+)(in). It carries out the reaction epitestosterone 17-sulfate(out) + 2 Na(+)(out) = epitestosterone 17-sulfate(in) + 2 Na(+)(in). It catalyses the reaction testosterone 17-sulfate(out) + 2 Na(+)(out) = testosterone 17-sulfate(in) + 2 Na(+)(in). The enzyme catalyses 16alpha-hydroxydehydroepiandrosterone 3-sulfate(out) + 2 Na(+)(out) = 16alpha-hydroxydehydroepiandrosterone 3-sulfate(in) + 2 Na(+)(in). In terms of biological role, transports sulfoconjugated steroid hormones from the extracellular compartment into the cytosol in a sodium-dependent manner without hydrolysis. Steroid sulfate hormones are commonly considered to be biologically inactive metabolites, that may be activated by steroid sulfatases into free steroids. May play an important role by delivering sulfoconjugated steroids to specific target cells in reproductive organs. May play a role transporting the estriol precursor 16alpha-hydroxydehydroepiandrosterone 3-sulfate (16a-OH-DHEAS) at the fetal blood vessel endothelium. Can also transport other sulfoconjugated molecules such as taurolithocholic acid-3-sulfate and sulfoconjugated pyrenes. The polypeptide is Sodium-dependent organic anion transporter (Slc10a6) (Rattus norvegicus (Rat)).